Reading from the N-terminus, the 657-residue chain is MVYEMLSPVPVKKRHRPTLVCLNCRRRKTKCDRGKPSCSNCLKLGETCVYSEDTDENASKKVRYEYMDDLGLPEFINMAPKGLHLLSKRSASWFNGLFSDIAICDRDPYLRITNAVIDILRKSASKGIDRSERDTVLQLPNSLKTVTMYNRSEKSEDQLYHQIAREFSALRSAPIPETYVPYEYEFWSKYYPYFVDKIHPLVPVFNLIELKDLLEKFFQRQKDHPGKLNDKVHESTLLMLTYLIINFFLLEFDSHNRLIQDHINIIKKWLVQSKWFQKTTLLQLRVWLVLRFHNWCTYHDNDGNRMNANDGLMGLIMGHCASLGITWQLWTNVDSDECKNIWINALHWDRKLAVLNGNDTFNGRTMRVPELPNDHLVLKFLKCCVDDPTHVNYKLAIEILNKLNFEEQNPMVTWEWKVIVAVTKLQINHGRLNHINEGISAVIASLEDLITLWNEHFIRPLAPVSYSSRIIEISMNKALVLLPAIILRARNPCKQKILQLMDKILTTYFNEFPYYYHVFKRLFKYKLTLNLINREDSLDHMLTILKHENHQVLEKLGITSKDAEMSDDDVIKVWNARFSFTEKVVNLKVEMMCKNYEPNLFSSSYQHALEKLEERHSAKADAIDVTQFLQQVFDSTDFDLFYGMDVGELPKMDSILP.

Positions 21 to 48 form a DNA-binding region, zn(2)-C6 fungal-type; sequence CLNCRRRKTKCDRGKPSCSNCLKLGETC.

The protein belongs to the OAF3 family.

The protein localises to the cytoplasm. Its subcellular location is the nucleus. It is found in the mitochondrion. Transcriptional inhibitor with a significantly increased number of target genes in response to oleate. This is Oleate activated transcription factor 3 (OAF3) from Kluyveromyces lactis (strain ATCC 8585 / CBS 2359 / DSM 70799 / NBRC 1267 / NRRL Y-1140 / WM37) (Yeast).